Consider the following 174-residue polypeptide: 2-C-methyl-D-erythritol 2,4-cyclodiphosphate synthase (174 aa).

The a divalent metal cation site is built by Asp13, His15, and His61. 13–15 (DAH) provides a ligand contact to 4-CDP-2-C-methyl-D-erythritol 2-phosphate. Residues 75–77 (DIG), 149–152 (TTTD), Phe156, and His159 each bind 4-CDP-2-C-methyl-D-erythritol 2-phosphate.

It belongs to the IspF family. As to quaternary structure, homotrimer. A divalent metal cation serves as cofactor.

It catalyses the reaction 4-CDP-2-C-methyl-D-erythritol 2-phosphate = 2-C-methyl-D-erythritol 2,4-cyclic diphosphate + CMP. The protein operates within isoprenoid biosynthesis; isopentenyl diphosphate biosynthesis via DXP pathway; isopentenyl diphosphate from 1-deoxy-D-xylulose 5-phosphate: step 4/6. Functionally, involved in the biosynthesis of isopentenyl diphosphate (IPP) and dimethylallyl diphosphate (DMAPP), two major building blocks of isoprenoid compounds. Catalyzes the conversion of 4-diphosphocytidyl-2-C-methyl-D-erythritol 2-phosphate (CDP-ME2P) to 2-C-methyl-D-erythritol 2,4-cyclodiphosphate (ME-CPP) with a corresponding release of cytidine 5-monophosphate (CMP). This is 2-C-methyl-D-erythritol 2,4-cyclodiphosphate synthase from Bifidobacterium longum (strain NCC 2705).